The primary structure comprises 268 residues: 3-deoxy-manno-octulosonate cytidylyltransferase (268 aa).

This sequence belongs to the KdsB family.

Its subcellular location is the cytoplasm. It catalyses the reaction 3-deoxy-alpha-D-manno-oct-2-ulosonate + CTP = CMP-3-deoxy-beta-D-manno-octulosonate + diphosphate. The protein operates within nucleotide-sugar biosynthesis; CMP-3-deoxy-D-manno-octulosonate biosynthesis; CMP-3-deoxy-D-manno-octulosonate from 3-deoxy-D-manno-octulosonate and CTP: step 1/1. It participates in bacterial outer membrane biogenesis; lipopolysaccharide biosynthesis. In terms of biological role, activates KDO (a required 8-carbon sugar) for incorporation into bacterial lipopolysaccharide in Gram-negative bacteria. This chain is 3-deoxy-manno-octulosonate cytidylyltransferase, found in Psychrobacter cryohalolentis (strain ATCC BAA-1226 / DSM 17306 / VKM B-2378 / K5).